The chain runs to 251 residues: UPF0246 protein PEPE_1842 (251 aa).

This sequence belongs to the UPF0246 family.

This is UPF0246 protein PEPE_1842 from Pediococcus pentosaceus (strain ATCC 25745 / CCUG 21536 / LMG 10740 / 183-1w).